Here is a 117-residue protein sequence, read N- to C-terminus: Large ribosomal subunit protein uL18 (117 aa).

The protein belongs to the universal ribosomal protein uL18 family. As to quaternary structure, part of the 50S ribosomal subunit; part of the 5S rRNA/L5/L18/L25 subcomplex. Contacts the 5S and 23S rRNAs.

This is one of the proteins that bind and probably mediate the attachment of the 5S RNA into the large ribosomal subunit, where it forms part of the central protuberance. The polypeptide is Large ribosomal subunit protein uL18 (Aster yellows witches'-broom phytoplasma (strain AYWB)).